Reading from the N-terminus, the 1000-residue chain is Isoleucine--tRNA ligase, mitochondrial (1000 aa).

The transit peptide at methionine 1–alanine 27 directs the protein to the mitochondrion. Residues proline 102 to histidine 112 carry the 'HIGH' region motif. Positions 649 and 652 each coordinate ATP. Residues lysine 649–serine 653 carry the 'KMSKS' region motif.

Belongs to the class-I aminoacyl-tRNA synthetase family.

The protein resides in the mitochondrion matrix. It carries out the reaction tRNA(Ile) + L-isoleucine + ATP = L-isoleucyl-tRNA(Ile) + AMP + diphosphate. In terms of biological role, aminoacyl-tRNA synthetase that catalyzes the specific attachment of isoleucine to its cognate tRNA (tRNA(Ile)). This chain is Isoleucine--tRNA ligase, mitochondrial (IARS2), found in Gallus gallus (Chicken).